The sequence spans 473 residues: Adenosylhomocysteinase (473 aa).

The substrate site is built by Thr64, Asp139, and Glu199. Thr200–Thr202 lines the NAD(+) pocket. Substrate-binding residues include Lys229 and Asp233. NAD(+) contacts are provided by residues Asn234, Gly263–Gly268, Glu286, Asn321, Ile342–His344, and Asn387.

The protein belongs to the adenosylhomocysteinase family. NAD(+) serves as cofactor.

It is found in the cytoplasm. The enzyme catalyses S-adenosyl-L-homocysteine + H2O = L-homocysteine + adenosine. The protein operates within amino-acid biosynthesis; L-homocysteine biosynthesis; L-homocysteine from S-adenosyl-L-homocysteine: step 1/1. May play a key role in the regulation of the intracellular concentration of adenosylhomocysteine. This is Adenosylhomocysteinase from Burkholderia thailandensis (strain ATCC 700388 / DSM 13276 / CCUG 48851 / CIP 106301 / E264).